Here is a 187-residue protein sequence, read N- to C-terminus: Large ribosomal subunit protein uL5 (187 aa).

This sequence belongs to the universal ribosomal protein uL5 family. Part of the 50S ribosomal subunit; part of the 5S rRNA/L5/L18/L25 subcomplex. Contacts the 5S rRNA and the P site tRNA. Forms a bridge to the 30S subunit in the 70S ribosome.

This is one of the proteins that bind and probably mediate the attachment of the 5S RNA into the large ribosomal subunit, where it forms part of the central protuberance. In the 70S ribosome it contacts protein S13 of the 30S subunit (bridge B1b), connecting the 2 subunits; this bridge is implicated in subunit movement. Contacts the P site tRNA; the 5S rRNA and some of its associated proteins might help stabilize positioning of ribosome-bound tRNAs. In Brachyspira hyodysenteriae (strain ATCC 49526 / WA1), this protein is Large ribosomal subunit protein uL5.